Here is a 320-residue protein sequence, read N- to C-terminus: Beta-ketoacyl-[acyl-carrier-protein] synthase III (320 aa).

Residues cysteine 114 and histidine 247 contribute to the active site. The ACP-binding stretch occupies residues 248–252 (QANRR). The active site involves asparagine 277.

Belongs to the thiolase-like superfamily. FabH family. Homodimer.

Its subcellular location is the cytoplasm. The enzyme catalyses malonyl-[ACP] + acetyl-CoA + H(+) = 3-oxobutanoyl-[ACP] + CO2 + CoA. Its pathway is lipid metabolism; fatty acid biosynthesis. Catalyzes the condensation reaction of fatty acid synthesis by the addition to an acyl acceptor of two carbons from malonyl-ACP. Catalyzes the first condensation reaction which initiates fatty acid synthesis and may therefore play a role in governing the total rate of fatty acid production. Possesses both acetoacetyl-ACP synthase and acetyl transacylase activities. Its substrate specificity determines the biosynthesis of branched-chain and/or straight-chain of fatty acids. In Neisseria meningitidis serogroup B (strain ATCC BAA-335 / MC58), this protein is Beta-ketoacyl-[acyl-carrier-protein] synthase III.